A 602-amino-acid chain; its full sequence is MPFKPVAEAFASMERITSRTQLTLLLTRLFKSTPPGAIGIVVYLIQGKLGPDWKGLPELGVGEKLLVKAIALAYKATEERVERLYKSVGDLGSVAERLSREYRSRAARAVTLEAFMAGGGEALTVRRVYNTLYRIAMAQGEGSRDIKLRLLAGLLADAEPVEAKYIVRFVEGRLRVGVGDATVLDALAMAFGGGAHARPVIERAYNLRADLGYIAEVVAREGVDALRGVKPQVGVPIRPMLAERGRDPAEILRKVGGRAVVEYKYDGERAQIHKKDGEVYIYSRRLENITRMFPDVVEMARKGLKAGEAIVEGEIVAVDPDNYEIQPFQVLMQRKRKHDIHRVMREVPVAVFLFDALYVDGEDLTSKPLPERRRRLKEIVVETPLWRLAESIETSDPEELWTFFLKAIEEGAEGVMVKAVHRDSVYTAGVRGWLWVKLKRDYKSEMMDTVDLVVVGAFYGRGKRGGKLSSLLMAAYDPDRDVFPTVCKVATGFTDEELDRMNEMLKKHIIPRKHPRVESRIEPDVWVEPALVAEILGAELTLSPMHTCCLNTVRPGVGISIRFPRFIRWRDDKSPEDATTTHELLEMYKRQLRRVEEPAEQV.

An ATP-binding site is contributed by Glu262. Residue Lys264 is the N6-AMP-lysine intermediate of the active site. The ATP site is built by Arg269, Arg284, Glu314, Phe354, Arg431, and Lys437.

It belongs to the ATP-dependent DNA ligase family. Monomer. Requires Mg(2+) as cofactor. Mn(2+) is required as a cofactor.

The catalysed reaction is ATP + (deoxyribonucleotide)n-3'-hydroxyl + 5'-phospho-(deoxyribonucleotide)m = (deoxyribonucleotide)n+m + AMP + diphosphate.. It catalyses the reaction ADP + (deoxyribonucleotide)n-3'-hydroxyl + 5'-phospho-(deoxyribonucleotide)m = (deoxyribonucleotide)n+m + AMP + phosphate.. The enzyme catalyses GTP + (deoxyribonucleotide)n-3'-hydroxyl + 5'-phospho-(deoxyribonucleotide)m = (deoxyribonucleotide)n+m + GMP + diphosphate.. Inhibited in the presence of 100 mM KCl, NaCl or NH(4)Cl. Its function is as follows. DNA ligase that seals nicks in double-stranded DNA during DNA replication, DNA recombination and DNA repair. Can also use ADP, but not NAD(+). The sequence is that of DNA ligase from Aeropyrum pernix (strain ATCC 700893 / DSM 11879 / JCM 9820 / NBRC 100138 / K1).